We begin with the raw amino-acid sequence, 29 residues long: Cyclotide psyleio B (29 aa).

The segment at residues 1 to 29 (GDLPICGETCFGGTCNTPGCVCAWPVCNR) is a cross-link (cyclopeptide (Gly-Arg)). Cystine bridges form between C6–C20, C10–C22, and C15–C27.

Post-translationally, this is a cyclic peptide.

Its function is as follows. Probably participates in a plant defense mechanism. The chain is Cyclotide psyleio B from Psychotria brachyceras.